Reading from the N-terminus, the 310-residue chain is Coproporphyrin III ferrochelatase (310 aa).

Residues tyrosine 13, arginine 30, arginine 46–tyrosine 47, serine 54, and tyrosine 125 each bind Fe-coproporphyrin III. Fe(2+) contacts are provided by histidine 181 and glutamate 262.

It belongs to the ferrochelatase family.

It localises to the cytoplasm. It catalyses the reaction Fe-coproporphyrin III + 2 H(+) = coproporphyrin III + Fe(2+). Its pathway is porphyrin-containing compound metabolism; protoheme biosynthesis. Involved in coproporphyrin-dependent heme b biosynthesis. Catalyzes the insertion of ferrous iron into coproporphyrin III to form Fe-coproporphyrin III. The chain is Coproporphyrin III ferrochelatase from Halalkalibacterium halodurans (strain ATCC BAA-125 / DSM 18197 / FERM 7344 / JCM 9153 / C-125) (Bacillus halodurans).